The primary structure comprises 295 residues: Bifunctional protein FolD (295 aa).

NADP(+) is bound by residues 166–168 (GRS), Ser191, and Ile232.

This sequence belongs to the tetrahydrofolate dehydrogenase/cyclohydrolase family. In terms of assembly, homodimer.

The enzyme catalyses (6R)-5,10-methylene-5,6,7,8-tetrahydrofolate + NADP(+) = (6R)-5,10-methenyltetrahydrofolate + NADPH. The catalysed reaction is (6R)-5,10-methenyltetrahydrofolate + H2O = (6R)-10-formyltetrahydrofolate + H(+). It participates in one-carbon metabolism; tetrahydrofolate interconversion. In terms of biological role, catalyzes the oxidation of 5,10-methylenetetrahydrofolate to 5,10-methenyltetrahydrofolate and then the hydrolysis of 5,10-methenyltetrahydrofolate to 10-formyltetrahydrofolate. The sequence is that of Bifunctional protein FolD from Rhodopseudomonas palustris (strain BisA53).